The following is a 753-amino-acid chain: Polyribonucleotide nucleotidyltransferase (753 aa).

Mg(2+) is bound by residues aspartate 488 and aspartate 494. One can recognise a KH domain in the interval 555–614 (PKLYTMKINPEKIRDVIGKGGSTIRALTEETGTQIDIGEDGTITIASSDAAKADEAKRRI). Residues 624 to 692 (GKIYEGPVTK…EKGRVKLSLK (69 aa)) enclose the S1 motif domain. A disordered region spans residues 692 to 753 (KALTERPAGM…EGEQQQQQQQ (62 aa)). Over residues 699–739 (AGMERSDRPAPAEREFRQPREPRQQREFREPREPREPRDGG) the composition is skewed to basic and acidic residues.

This sequence belongs to the polyribonucleotide nucleotidyltransferase family. Mg(2+) serves as cofactor.

The protein resides in the cytoplasm. It catalyses the reaction RNA(n+1) + phosphate = RNA(n) + a ribonucleoside 5'-diphosphate. Its function is as follows. Involved in mRNA degradation. Catalyzes the phosphorolysis of single-stranded polyribonucleotides processively in the 3'- to 5'-direction. This chain is Polyribonucleotide nucleotidyltransferase, found in Delftia acidovorans (strain DSM 14801 / SPH-1).